The chain runs to 238 residues: Zwei Ig domain protein zig-2 (238 aa).

An N-terminal signal peptide occupies residues 1 to 17; that stretch reads MLKFTAISFVLLNAAES. The 100-residue stretch at 31–130 folds into the Ig-like C2-type 1 domain; the sequence is PLLKFTRTPN…NGLTKLEHVA (100 aa). N40 and N43 each carry an N-linked (GlcNAc...) asparagine glycan. An intrachain disulfide couples C54 to C117. Residues N137, N206, and N216 are each glycosylated (N-linked (GlcNAc...) asparagine). The Ig-like C2-type 2 domain maps to 149 to 230; it reads PFISMTVDFR…NHFGETTAIT (82 aa). An intrachain disulfide couples C170 to C217.

In terms of tissue distribution, expressed in PVT neurons and weakly in some head neurons.

The protein localises to the secreted. Its function is as follows. Probably not involved in maintaining the position of ASI and ASH head neuron cell bodies and ventral nerve cord axons of PVQ, PVP, RMEV, AVK and HSN neurons. The sequence is that of Zwei Ig domain protein zig-2 from Caenorhabditis elegans.